Here is a 110-residue protein sequence, read N- to C-terminus: Multidrug transporter EmrE (110 aa).

The next 4 helical transmembrane spans lie at 4 to 21 (YIYL…TTLM), 34 to 52 (VGTI…QTLA), 58 to 80 (IAYA…GFFG), and 87 to 104 (AIIG…INLL).

Belongs to the drug/metabolite transporter (DMT) superfamily. Small multidrug resistance (SMR) (TC 2.A.7.1) family. Homodimer. Forms an antiparallel dimeric structure. Also forms dimers of homodimers.

It localises to the cell inner membrane. Substrate identity influences both the ground-state and transition-state energies for the conformational exchange process, emphasizing the coupling between substrate binding and transport. Multidrug efflux protein that confers resistance to a wide range of toxic compounds, including ethidium, methyl viologen, acriflavine, tetraphenylphosphonium (TPP(+)), benzalkonium, propidium, dequalinium and the aminoglycoside antibiotics streptomycin and tobramycin. Can also transport the osmoprotectants betaine and choline. The drug efflux is coupled to an influx of protons. Can couple antiport of a drug to either one or two protons, performing both electrogenic and electroneutral transport of a single substrate. Simultaneously binds and cotransports proton and drug. In Escherichia coli (strain K12), this protein is Multidrug transporter EmrE (emrE).